We begin with the raw amino-acid sequence, 29 residues long: uncharacterized protein (29 aa).

The protein localises to the plastid. It is found in the chloroplast. This is an uncharacterized protein from Trieres chinensis (Marine centric diatom).